Here is a 325-residue protein sequence, read N- to C-terminus: Quinone oxidoreductase (325 aa).

The protein belongs to the zinc-containing alcohol dehydrogenase family. Quinone oxidoreductase subfamily.

It carries out the reaction 2 a quinone + NADPH + H(+) = 2 a 1,4-benzosemiquinone + NADP(+). The sequence is that of Quinone oxidoreductase (qor) from Pseudomonas aeruginosa (strain ATCC 15692 / DSM 22644 / CIP 104116 / JCM 14847 / LMG 12228 / 1C / PRS 101 / PAO1).